The chain runs to 803 residues: Mechanosensitive cation channel TMEM63A (803 aa).

Over 1–51 (MTDSPFLELWQSRTVAIRERLGIGDQPNDSYCYNSAKNSTVLQGVTFGGIP) the chain is Extracellular. The helical transmembrane segment at 52 to 74 (TVLFIDVSCFLFLIVVFSIIRRK) threads the bilayer. Residues 75–133 (FWDYGRIALVSEGNSESRFRRLSSSSSGQQDFESELGCCSWLTAIFRLHDDQILEWCGE) are Cytoplasmic-facing. A helical transmembrane segment spans residues 134–166 (DAIHYLSFQRHIIFLLVVVSCLSLCIILPVNLS). Residues 167-190 (GDLLDKDPYSFGRTTIANLQTDNN) lie on the Extracellular side of the membrane. Residues 191-216 (LLWLHTIFAILYLILTVVFMRHHTQS) traverse the membrane as a helical segment. The Cytoplasmic portion of the chain corresponds to 217–415 (IKYKEESLVR…CWKNLSIQGF (199 aa)). The segment at 218-413 (KYKEESLVRR…DICWKNLSIQ (196 aa)) is intracellular linker IL2; confers mechanosensitivity. A helical membrane pass occupies residues 416–443 (RWWFQWLGINFILFVGLFFLTTPSIILS). Residues 444-461 (TMDKFNVTKPIHALNDPI) are Extracellular-facing. The chain crosses the membrane as a helical span at residues 462-489 (ISQFFPTLLLWSFSALLPTIVCYSTLLE). The Cytoplasmic segment spans residues 490-494 (SHWTK). The chain crosses the membrane as a helical span at residues 495 to 531 (SGENRIMMTKVYIFLIFMVLILPSLGLTSLDFFFRWL). Topologically, residues 532-553 (FDKTSSEASIRLECVFLPDQGA) are extracellular. The chain crosses the membrane as a helical span at residues 554 to 585 (FFVNYVIASAFIGNGMELLRLPGLILYTFRMV). The tract at residues 554-585 (FFVNYVIASAFIGNGMELLRLPGLILYTFRMV) is gating helix. Residues 586–605 (MAKTAADRRNVKQHQAFEYE) are Cytoplasmic-facing. A helical membrane pass occupies residues 606–623 (FGAMYAWMLCVFTVIMAY). Residues 624–627 (SITC) are Extracellular-facing. A helical transmembrane segment spans residues 628–650 (PIIVPFGLIYILLKHMVDRHNLY). Topologically, residues 651 to 660 (FAYLPAKLEK) are cytoplasmic. Residues 661 to 688 (RIHFAAVNQALAAPILCLFWLYFFSFLR) traverse the membrane as a helical segment. Residues 689–693 (LGLKA) are Extracellular-facing. A helical membrane pass occupies residues 694-708 (PLTLFTFLVLLLTIL). The Cytoplasmic portion of the chain corresponds to 709 to 803 (VCLAYTCFGC…DSVAAADQED (95 aa)).

The protein belongs to the CSC1 (TC 1.A.17) family. As to quaternary structure, (Microbial infection) Interacts with H.contortus GAL-1 (via domain galectin 1).

It is found in the lysosome membrane. The protein resides in the early endosome membrane. It localises to the cell membrane. It carries out the reaction Ca(2+)(in) = Ca(2+)(out). Its function is as follows. Mechanosensitive cation channel with low conductance and high activation threshold. In contrast to TMEM63B, does not show phospholipid scramblase activity. Acts as a regulator of lysosomal morphology by mediating lysosomal mechanosensitivity. Important for the baby's first breath and respiration throughout life. Upon lung inflation conducts cation currents in alveolar type 1 and 2 cells triggering lamellar body exocytosis and surfactant secretion into airspace. Also acts as an osmosensitive cation channel preferentially activated by hypotonic stress. Functionally, (Microbial infection) Involved in the immunomodulatory effects exerted by H.contortus GAL-1 on host peripheral blood mononuclear cells to down-regulate host immune response. The sequence is that of Mechanosensitive cation channel TMEM63A (TMEM63A) from Capra hircus (Goat).